Reading from the N-terminus, the 461-residue chain is Phytase PHO112 (461 aa).

3 cysteine pairs are disulfide-bonded: cysteine 62/cysteine 384, cysteine 261/cysteine 274, and cysteine 404/cysteine 412. The 1D-myo-inositol hexakisphosphate site is built by arginine 72, histidine 73, arginine 76, and serine 79. Histidine 73 functions as the Nucleophile in the catalytic mechanism. N-linked (GlcNAc...) asparagine glycans are attached at residues asparagine 97 and asparagine 157. Arginine 169 provides a ligand contact to 1D-myo-inositol hexakisphosphate. N-linked (GlcNAc...) asparagine glycans are attached at residues asparagine 229 and asparagine 248. Lysine 293 serves as a coordination point for 1D-myo-inositol hexakisphosphate. N-linked (GlcNAc...) asparagine glycosylation is found at asparagine 302 and asparagine 313. The 1D-myo-inositol hexakisphosphate site is built by histidine 334 and aspartate 335. Residues asparagine 437 and asparagine 452 are each glycosylated (N-linked (GlcNAc...) asparagine).

Belongs to the histidine acid phosphatase family. Monomer.

The protein localises to the secreted. It catalyses the reaction 1D-myo-inositol hexakisphosphate + H2O = 1D-myo-inositol 1,2,4,5,6-pentakisphosphate + phosphate. The catalysed reaction is 1D-myo-inositol 1,2,4,5,6-pentakisphosphate + H2O = 1D-myo-inositol 1,2,5,6-tetrakisphosphate + phosphate. It carries out the reaction 1D-myo-inositol 1,2,5,6-tetrakisphosphate + H2O = 1D-myo-inositol 1,2,6-trisphosphate + phosphate. The enzyme catalyses 1D-myo-inositol 1,2,6-trisphosphate + H2O = 1D-myo-inositol 1,2-bisphosphate + phosphate. It catalyses the reaction 1D-myo-inositol 1,2-bisphosphate + H2O = 1D-myo-inositol 2-phosphate + phosphate. Catalyzes the phosphate monoester hydrolysis of phytic acid (myo-inositol hexakisphosphate), which results in the stepwise formation of myo-inositol pentakis-, tetrakis-, tris-, bis-, and monophosphates, as well as the liberation of inorganic phosphate. Myo-inositol 2-monophosphate is the end product. Responsible of about 25% of the phytase activity. The residual phytase activity might be contributed by other cytosolic or cellular enzymes such as acid phosphatase that also degraded the substrate phytate. Is essential for human tissue damage during infection. The protein is Phytase PHO112 (PHO112) of Candida albicans (strain SC5314 / ATCC MYA-2876) (Yeast).